Consider the following 432-residue polypeptide: Septin-11 (432 aa).

A2 is subject to N-acetylalanine. Residue S9 is modified to Phosphoserine. A Septin-type G domain is found at 38 to 304; the sequence is QGFCFNILCV…ELYRRCKLEE (267 aa). The interval 48–55 is G1 motif; the sequence is GETGIGKS. Residues 48 to 55, G103, 184 to 192, G238, and R253 each bind GTP; these read GETGIGKS and KADTIAKNE. Residues 100-103 are G3 motif; the sequence is DTVG. The tract at residues 183 to 186 is G4 motif; the sequence is AKAD. A coiled-coil region spans residues 320–413; that stretch reads QETYEAKRNE…LLQSQAQQSG (94 aa). Over residues 403-416 the composition is skewed to low complexity; sequence QLLQSQAQQSGAQQ. The disordered stretch occupies residues 403–432; sequence QLLQSQAQQSGAQQTKKDKDKKNSPWLCTE.

The protein belongs to the TRAFAC class TrmE-Era-EngA-EngB-Septin-like GTPase superfamily. Septin GTPase family. As to quaternary structure, septins polymerize into heterooligomeric protein complexes that form filaments, and can associate with cellular membranes, actin filaments and microtubules. Forms homooligomers. GTPase activity is required for filament formation. Interacts with SEPTIN7, SEPTIN9 and SEPTIN12.

The protein resides in the cytoplasm. The protein localises to the cytoskeleton. Its subcellular location is the synapse. It is found in the cell projection. It localises to the dendritic spine. The protein resides in the axon. Filament-forming cytoskeletal GTPase. May play a role in cytokinesis (Potential). May play a role in the cytoarchitecture of neurons, including dendritic arborization and dendritic spines, and in GABAergic synaptic connectivity. This chain is Septin-11, found in Macaca fascicularis (Crab-eating macaque).